The following is a 64-amino-acid chain: Cytochrome c oxidase subunit 2 (64 aa).

At 1–14 (MAHPSQLGFQDAAS) the chain is on the mitochondrial intermembrane side. Residues 15 to 45 (PMMEELLHFHDHALMVVFLISTFVLYIILTM) form a helical membrane-spanning segment. At 46–64 (LTTKLTDKLILESHEIEII) the chain is on the mitochondrial matrix side.

This sequence belongs to the cytochrome c oxidase subunit 2 family. As to quaternary structure, component of the cytochrome c oxidase (complex IV, CIV), a multisubunit enzyme composed of 14 subunits. The complex is composed of a catalytic core of 3 subunits MT-CO1, MT-CO2 and MT-CO3, encoded in the mitochondrial DNA, and 11 supernumerary subunits COX4I, COX5A, COX5B, COX6A, COX6B, COX6C, COX7A, COX7B, COX7C, COX8 and NDUFA4, which are encoded in the nuclear genome. The complex exists as a monomer or a dimer and forms supercomplexes (SCs) in the inner mitochondrial membrane with NADH-ubiquinone oxidoreductase (complex I, CI) and ubiquinol-cytochrome c oxidoreductase (cytochrome b-c1 complex, complex III, CIII), resulting in different assemblies (supercomplex SCI(1)III(2)IV(1) and megacomplex MCI(2)III(2)IV(2)). Found in a complex with TMEM177, COA6, COX18, COX20, SCO1 and SCO2. Interacts with TMEM177 in a COX20-dependent manner. Interacts with COX20. Interacts with COX16. Requires Cu cation as cofactor.

Its subcellular location is the mitochondrion inner membrane. The catalysed reaction is 4 Fe(II)-[cytochrome c] + O2 + 8 H(+)(in) = 4 Fe(III)-[cytochrome c] + 2 H2O + 4 H(+)(out). Its function is as follows. Component of the cytochrome c oxidase, the last enzyme in the mitochondrial electron transport chain which drives oxidative phosphorylation. The respiratory chain contains 3 multisubunit complexes succinate dehydrogenase (complex II, CII), ubiquinol-cytochrome c oxidoreductase (cytochrome b-c1 complex, complex III, CIII) and cytochrome c oxidase (complex IV, CIV), that cooperate to transfer electrons derived from NADH and succinate to molecular oxygen, creating an electrochemical gradient over the inner membrane that drives transmembrane transport and the ATP synthase. Cytochrome c oxidase is the component of the respiratory chain that catalyzes the reduction of oxygen to water. Electrons originating from reduced cytochrome c in the intermembrane space (IMS) are transferred via the dinuclear copper A center (CU(A)) of subunit 2 and heme A of subunit 1 to the active site in subunit 1, a binuclear center (BNC) formed by heme A3 and copper B (CU(B)). The BNC reduces molecular oxygen to 2 water molecules using 4 electrons from cytochrome c in the IMS and 4 protons from the mitochondrial matrix. The chain is Cytochrome c oxidase subunit 2 (mt-co2) from Geophagus steindachneri (Red hump earth eater).